Reading from the N-terminus, the 211-residue chain is Thymidylate kinase (211 aa).

7–14 (GIDASGKS) is an ATP binding site.

The protein belongs to the thymidylate kinase family.

The catalysed reaction is dTMP + ATP = dTDP + ADP. Functionally, phosphorylation of dTMP to form dTDP in both de novo and salvage pathways of dTTP synthesis. This is Thymidylate kinase from Mesomycoplasma hyopneumoniae (strain 7448) (Mycoplasma hyopneumoniae).